Consider the following 159-residue polypeptide: Endoribonuclease YbeY (159 aa).

The Zn(2+) site is built by His124, His128, and His134.

It belongs to the endoribonuclease YbeY family. It depends on Zn(2+) as a cofactor.

The protein localises to the cytoplasm. Functionally, single strand-specific metallo-endoribonuclease involved in late-stage 70S ribosome quality control and in maturation of the 3' terminus of the 16S rRNA. This is Endoribonuclease YbeY from Halalkalibacterium halodurans (strain ATCC BAA-125 / DSM 18197 / FERM 7344 / JCM 9153 / C-125) (Bacillus halodurans).